The sequence spans 139 residues: von Hippel-Lindau-like protein (139 aa).

The interval 1-22 (MPWRAGNGVGLEAQAGTQEAGP) is disordered. The beta-domain stretch occupies residues 54–135 (SRIIICNHSP…GQPVFANITL (82 aa)).

The protein belongs to the VHL family. In terms of assembly, interacts via the beta domain with the ODD domain of HIF1A. This interaction is independent of prolyl hydroxylation of HIF1A. In terms of tissue distribution, abundantly expressed in the placenta.

Its function is as follows. Functions as a dominant-negative VHL to serve as a protector of HIFalpha. In Homo sapiens (Human), this protein is von Hippel-Lindau-like protein (VHLL).